A 1705-amino-acid chain; its full sequence is Protein TIC 214 (1705 aa).

A run of 5 helical transmembrane segments spans residues 18–38 (IINS…FSIG), 67–87 (FITG…HLAL), 127–147 (LSIQ…HFIL), 175–195 (VGWI…LVWI), and 218–238 (SMSM…HYLG).

The protein belongs to the TIC214 family. In terms of assembly, part of the Tic complex.

Its subcellular location is the plastid. The protein localises to the chloroplast inner membrane. Its function is as follows. Involved in protein precursor import into chloroplasts. May be part of an intermediate translocation complex acting as a protein-conducting channel at the inner envelope. This Helianthus annuus (Common sunflower) protein is Protein TIC 214.